The primary structure comprises 675 residues: UvrABC system protein B (675 aa).

The region spanning 32–417 is the Helicase ATP-binding domain; it reads EGLSDGLAYQ…EHAGQVVEQV (386 aa). 45 to 52 lines the ATP pocket; that stretch reads GVTGSGKT. The short motif at 98–121 is the Beta-hairpin element; it reads YYDYYQPEAYVPSRDLFIEKDSAI. A Helicase C-terminal domain is found at 436 to 602; the sequence is QVDDLMSEIN…QIKKQVKDII (167 aa). Residues 634–669 form the UVR domain; it reads IKEIAKLEKAMQQAARDLQFEEAAVLRDRIRNIKEN.

It belongs to the UvrB family. As to quaternary structure, forms a heterotetramer with UvrA during the search for lesions. Interacts with UvrC in an incision complex.

Its subcellular location is the cytoplasm. Functionally, the UvrABC repair system catalyzes the recognition and processing of DNA lesions. A damage recognition complex composed of 2 UvrA and 2 UvrB subunits scans DNA for abnormalities. Upon binding of the UvrA(2)B(2) complex to a putative damaged site, the DNA wraps around one UvrB monomer. DNA wrap is dependent on ATP binding by UvrB and probably causes local melting of the DNA helix, facilitating insertion of UvrB beta-hairpin between the DNA strands. Then UvrB probes one DNA strand for the presence of a lesion. If a lesion is found the UvrA subunits dissociate and the UvrB-DNA preincision complex is formed. This complex is subsequently bound by UvrC and the second UvrB is released. If no lesion is found, the DNA wraps around the other UvrB subunit that will check the other stand for damage. The polypeptide is UvrABC system protein B (Neisseria gonorrhoeae).